A 151-amino-acid polypeptide reads, in one-letter code: Large ribosomal subunit protein bL9 (151 aa).

The protein belongs to the bacterial ribosomal protein bL9 family.

Functionally, binds to the 23S rRNA. The sequence is that of Large ribosomal subunit protein bL9 from Nitrosococcus oceani (strain ATCC 19707 / BCRC 17464 / JCM 30415 / NCIMB 11848 / C-107).